Here is a 706-residue protein sequence, read N- to C-terminus: Vitamin B12-dependent ribonucleoside-diphosphate reductase (706 aa).

The region spanning 21–109 (AKVRRRDGTL…IYRQRRAELR (89 aa)) is the ATP-cone domain. Substrate-binding positions include serine 191, 206-207 (GC), glycine 235, 389-393 (NPCGE), and 534-538 (PTGTI). A disulfide bridge connects residues cysteine 207 and cysteine 402. The active-site Proton acceptor is the asparagine 389. Cysteine 391 (cysteine radical intermediate) is an active-site residue. Catalysis depends on glutamate 393, which acts as the Proton acceptor.

This sequence belongs to the ribonucleoside diphosphate reductase class-2 family. It depends on adenosylcob(III)alamin as a cofactor.

It catalyses the reaction a 2'-deoxyribonucleoside 5'-diphosphate + [thioredoxin]-disulfide + H2O = a ribonucleoside 5'-diphosphate + [thioredoxin]-dithiol. Provides the precursors necessary for DNA synthesis. Catalyzes the biosynthesis of deoxyribonucleotides from the corresponding ribonucleotides. The polypeptide is Vitamin B12-dependent ribonucleoside-diphosphate reductase (nrdZ) (Mycobacterium tuberculosis (strain ATCC 25618 / H37Rv)).